The following is a 346-amino-acid chain: MPGDVGEETLEIGAVVGKRYKVVQKLGEGGCGSVFKVEDTSEKGQHYALKVEFKSQDAGNILKMEVQILSQLISKKHVAKCVASGKKERYSYMVMTLLGESLDSLLKKHGPFLNVSTQVRIGICILFGIKQVHDIGYLHRDLKPANVAMGCKGSADERYFLVLDFGLARQYIADEDDGLKMRRPREKTYFRGTARYCSVAMHDRYEQGRVDDLWALVYILAEMRCRLAWHDVDDKVEIGEMKRKIHDEVLFAKSPVQMLSFVKTVRSTLFYHRPDYEKLFKLLEDVMKCANYKWSDPYHWEPEKKKNPASQGNKFGLGKKGTKESGELPEASFFTVDDFNTNPLGF.

Positions 20 to 287 (YKVVQKLGEG…KLFKLLEDVM (268 aa)) constitute a Protein kinase domain. Residues 26–34 (LGEGGCGSV) and K50 contribute to the ATP site. The active-site Proton acceptor is D141. The segment at 302–326 (PEKKKNPASQGNKFGLGKKGTKESG) is disordered.

It belongs to the protein kinase superfamily. Ser/Thr protein kinase family.

It carries out the reaction L-seryl-[protein] + ATP = O-phospho-L-seryl-[protein] + ADP + H(+). The catalysed reaction is L-threonyl-[protein] + ATP = O-phospho-L-threonyl-[protein] + ADP + H(+). The protein is Putative serine/threonine-protein kinase K06H7.1 of Caenorhabditis elegans.